The following is a 611-amino-acid chain: Leucine aminopeptidase 2 (611 aa).

A peptide contacts are provided by residues 135 to 137 (QCQ) and 265 to 270 (PYGGME). Residue histidine 294 coordinates Zn(2+). Catalysis depends on glutamate 295, which acts as the Proton acceptor. Zn(2+) is bound by residues histidine 298 and glutamate 317. Tyrosine 383 acts as the Proton donor in catalysis.

It belongs to the peptidase M1 family. Requires Zn(2+) as cofactor.

It localises to the cytoplasm. The protein resides in the nucleus. The catalysed reaction is an epoxide + H2O = an ethanediol. Its function is as follows. Aminopeptidase that preferentially cleaves di- and tripeptides. Also has low epoxide hydrolase activity (in vitro). Can hydrolyze the epoxide leukotriene LTA(4) but it forms preferentially 5,6-dihydroxy-7,9,11,14-eicosatetraenoic acid rather than the cytokine leukotriene B(4) as the product compared to the homologous mammalian enzyme (in vitro). This chain is Leucine aminopeptidase 2, found in Chaetomium globosum (strain ATCC 6205 / CBS 148.51 / DSM 1962 / NBRC 6347 / NRRL 1970) (Soil fungus).